A 281-amino-acid polypeptide reads, in one-letter code: MAFSDLTSRTVRFYDNWIKDADPRVEDYLLMSSPLPQTIILGLYVYFVTSLGPKLMENRKPFELKKAMITYNFFIVLFSVYMCYEFVMSGWGTGYSFRCDIVDYSQSPRAMRMVHTCWLYYFSKFIELLDTIFFVLRKKNSQVTFLHVFHHTIMPWTWWFGVKFAAGGLGTFHAFLNTAVHVVMYSYYGLCAMGPAYQKYLWWKKHLTSLQLVQFVLVTIHIGQIFFMEDCNYQYPVFLYIIMSYGCIFLLLFLHFWYRAYTKGQRLPKTLENGNCKSKRH.

Position 2 is an N-acetylalanine (alanine 2). The Lumenal segment spans residues 2 to 27; it reads AFSDLTSRTVRFYDNWIKDADPRVED. The chain crosses the membrane as a helical span at residues 28–48; sequence YLLMSSPLPQTIILGLYVYFV. Over 49–72 the chain is Cytoplasmic; sequence TSLGPKLMENRKPFELKKAMITYN. A helical membrane pass occupies residues 73 to 93; that stretch reads FFIVLFSVYMCYEFVMSGWGT. Residues 94 to 115 are Lumenal-facing; the sequence is GYSFRCDIVDYSQSPRAMRMVH. Cysteine 99 and cysteine 231 are oxidised to a cystine. Residues 116–136 traverse the membrane as a helical segment; the sequence is TCWLYYFSKFIELLDTIFFVL. Residues lysine 124, arginine 137, lysine 139, glutamine 142, and histidine 147 each contribute to the 3-oxoeicosanoyl-CoA site. Over 137-142 the chain is Cytoplasmic; the sequence is RKKNSQ. The chain crosses the membrane as a helical span at residues 143–162; the sequence is VTFLHVFHHTIMPWTWWFGV. The short motif at 147–151 is the HxxHH motif element; it reads HVFHH. Residue histidine 150 is the Nucleophile of the active site. Over 163–171 the chain is Lumenal; that stretch reads KFAAGGLGT. The chain crosses the membrane as a helical span at residues 172–194; the sequence is FHAFLNTAVHVVMYSYYGLCAMG. Residues tyrosine 187, lysine 204, threonine 208, and glutamine 211 each coordinate 3-oxoeicosanoyl-CoA. Residues 195–206 lie on the Cytoplasmic side of the membrane; that stretch reads PAYQKYLWWKKH. The chain crosses the membrane as a helical span at residues 207–227; that stretch reads LTSLQLVQFVLVTIHIGQIFF. Over 228 to 236 the chain is Lumenal; the sequence is MEDCNYQYP. Residues 237 to 257 form a helical membrane-spanning segment; it reads VFLYIIMSYGCIFLLLFLHFW. Residues 258–281 are Cytoplasmic-facing; it reads YRAYTKGQRLPKTLENGNCKSKRH. Arginine 266 contributes to the 3-oxoeicosanoyl-CoA binding site. Positions 277–281 match the Di-lysine motif motif; it reads KSKRH.

This sequence belongs to the ELO family. ELOVL7 subfamily. As to quaternary structure, homodimer. Interacts with TECR.

It is found in the endoplasmic reticulum membrane. The catalysed reaction is a very-long-chain acyl-CoA + malonyl-CoA + H(+) = a very-long-chain 3-oxoacyl-CoA + CO2 + CoA. The enzyme catalyses eicosanoyl-CoA + malonyl-CoA + H(+) = 3-oxodocosanoyl-CoA + CO2 + CoA. It catalyses the reaction (5Z,8Z,11Z,14Z)-eicosatetraenoyl-CoA + malonyl-CoA + H(+) = (7Z,10Z,13Z,16Z)-3-oxodocosatetraenoyl-CoA + CO2 + CoA. It carries out the reaction (6Z,9Z,12Z)-octadecatrienoyl-CoA + malonyl-CoA + H(+) = (8Z,11Z,14Z)-3-oxoeicosatrienoyl-CoA + CO2 + CoA. The catalysed reaction is (9Z,12Z)-octadecadienoyl-CoA + malonyl-CoA + H(+) = (11Z,14Z)-3-oxoicosa-11,14-dienoyl-CoA + CO2 + CoA. The enzyme catalyses (9Z)-octadecenoyl-CoA + malonyl-CoA + H(+) = 3-oxo-(11Z)-eicosenoyl-CoA + CO2 + CoA. It catalyses the reaction octadecanoyl-CoA + malonyl-CoA + H(+) = 3-oxoeicosanoyl-CoA + CO2 + CoA. It carries out the reaction hexadecanoyl-CoA + malonyl-CoA + H(+) = 3-oxooctadecanoyl-CoA + CO2 + CoA. The catalysed reaction is (9Z,12Z,15Z)-octadecatrienoyl-CoA + malonyl-CoA + H(+) = (11Z,14Z,17Z)-3-oxoeicosatrienoyl-CoA + CO2 + CoA. It participates in lipid metabolism; fatty acid biosynthesis. Its function is as follows. Catalyzes the first and rate-limiting reaction of the four reactions that constitute the long-chain fatty acids elongation cycle. This endoplasmic reticulum-bound enzymatic process allows the addition of 2 carbons to the chain of long- and very long-chain fatty acids (VLCFAs) per cycle. Condensing enzyme with higher activity toward C18 acyl-CoAs, especially C18:3(n-3) acyl-CoAs and C18:3(n-6)-CoAs. Also active toward C20:4-, C18:0-, C18:1-, C18:2- and C16:0-CoAs, and weakly toward C20:0-CoA. Little or no activity toward C22:0-, C24:0-, or C26:0-CoAs. May participate in the production of saturated and polyunsaturated VLCFAs of different chain lengths that are involved in multiple biological processes as precursors of membrane lipids and lipid mediators. This Mus musculus (Mouse) protein is Very long chain fatty acid elongase 7.